Reading from the N-terminus, the 82-residue chain is MAGKPVERPFSDILTSIRYWVIHSITVPALFIAGWLFVSTGLAYDVFGTPRPNEYFTEDRQEAPLITDRFNALEQVKKLSGN.

Residues Val-21 to Trp-35 form a helical membrane-spanning segment. His-23 contributes to the heme binding site.

The protein belongs to the PsbE/PsbF family. In terms of assembly, heterodimer of an alpha subunit and a beta subunit. PSII is composed of 1 copy each of membrane proteins PsbA, PsbB, PsbC, PsbD, PsbE, PsbF, PsbH, PsbI, PsbJ, PsbK, PsbL, PsbM, PsbT, PsbX, PsbY, PsbZ, Psb30/Ycf12, at least 3 peripheral proteins of the oxygen-evolving complex and a large number of cofactors. It forms dimeric complexes. Heme b serves as cofactor.

It localises to the plastid. The protein localises to the chloroplast thylakoid membrane. Its function is as follows. This b-type cytochrome is tightly associated with the reaction center of photosystem II (PSII). PSII is a light-driven water:plastoquinone oxidoreductase that uses light energy to abstract electrons from H(2)O, generating O(2) and a proton gradient subsequently used for ATP formation. It consists of a core antenna complex that captures photons, and an electron transfer chain that converts photonic excitation into a charge separation. This is Cytochrome b559 subunit alpha from Chlamydomonas reinhardtii (Chlamydomonas smithii).